A 694-amino-acid polypeptide reads, in one-letter code: DNA-binding protein RFX2 (694 aa).

Residues 174–249 constitute a DNA-binding region (RFX-type winged-helix); that stretch reads HLQWLLDNYE…YHYYGIRLKP (76 aa). Disordered stretches follow at residues 268 to 309 and 659 to 694; these read QPIH…SQHH and DDVSELGSDNDGDPRISGQPPVKRERVDLNHSMQEM. Polar residues predominate over residues 288–299; the sequence is NTANSSQHTSPE. The span at 300–309 shows a compositional bias: low complexity; sequence QSVAAQSQHH.

It belongs to the RFX family. As to quaternary structure, homodimer. Heterodimer; heterodimerizes with other rfx proteins.

It is found in the nucleus. Its subcellular location is the cytoplasm. Transcription factor that acts as a key regulator of ciliogenesis. Specifically regulates expression of genes required for cilium assembly and function. Recognizes and binds the X-box, a regulatory motif with DNA sequence 5'-GTNRCC(0-3N)RGYAAC-3' present on promoters. Required for neural tube closure and neural ciliogenesis. The protein is DNA-binding protein RFX2 (rfx2) of Xenopus tropicalis (Western clawed frog).